The sequence spans 108 residues: UPF0060 membrane protein SAB2216c (108 aa).

4 helical membrane-spanning segments follow: residues 5 to 25, 31 to 51, 60 to 80, and 86 to 106; these read IFIFILAGLCEIGGGYLIWLW, CSLVGLIGGAILMLYGVIATF, VYAAYGGVFIIMSLIFAMVVD, and KYDVIGAIICIVGVLVMLLPS.

The protein belongs to the UPF0060 family.

It localises to the cell membrane. This Staphylococcus aureus (strain bovine RF122 / ET3-1) protein is UPF0060 membrane protein SAB2216c.